A 318-amino-acid polypeptide reads, in one-letter code: ATP synthase gamma chain (318 aa).

It belongs to the ATPase gamma chain family. F-type ATPases have 2 components, CF(1) - the catalytic core - and CF(0) - the membrane proton channel. CF(1) has five subunits: alpha(3), beta(3), gamma(1), delta(1), epsilon(1). CF(0) has three main subunits: a, b and c.

The protein localises to the cell membrane. Functionally, produces ATP from ADP in the presence of a proton gradient across the membrane. The gamma chain is believed to be important in regulating ATPase activity and the flow of protons through the CF(0) complex. This Lactobacillus gasseri (strain ATCC 33323 / DSM 20243 / BCRC 14619 / CIP 102991 / JCM 1131 / KCTC 3163 / NCIMB 11718 / NCTC 13722 / AM63) protein is ATP synthase gamma chain.